The primary structure comprises 175 residues: uncharacterized protein (175 aa).

This is an uncharacterized protein from Treponema pallidum (strain Nichols).